A 344-amino-acid chain; its full sequence is Putative NAD(P)H nitroreductase MT3217 (344 aa).

Residues 40–44 (QPWRW) and arginine 326 each bind FMN.

This sequence belongs to the nitroreductase family. As to quaternary structure, interacts with human TLR2. Requires FMN as cofactor.

Its function is as follows. Stimulates pro-inflammatory cytokine expression via TLR2 signaling pathway. Activation of TLR2 results in the phosphorylation and activation of NF-kappa-B. Also induces TLR2 expression. May influence the innate immune responses to facilitate the survival of M.tuberculosis in the granulomatous microenvironment. The chain is Putative NAD(P)H nitroreductase MT3217 from Mycobacterium tuberculosis (strain CDC 1551 / Oshkosh).